The primary structure comprises 275 residues: Large ribosomal subunit protein uL2c (275 aa).

Residues 225-249 (PVDHPHGGGEGRAPIGRKKPTTPWG) form a disordered region.

This sequence belongs to the universal ribosomal protein uL2 family. Part of the 50S ribosomal subunit.

The protein localises to the plastid. In Cuscuta reflexa (Southern Asian dodder), this protein is Large ribosomal subunit protein uL2c (rpl2).